The chain runs to 321 residues: Hydropyrene synthase (321 aa).

Mg(2+) contacts are provided by Asp82, Asn225, Ser229, and Glu233. A DDxx(x)D/E motif motif is present at residues Asp82–Asp87. Residues Asn225 to Glu233 carry the NDxxSxxxD/E motif motif.

Belongs to the terpene synthase family. Mg(2+) serves as cofactor.

It catalyses the reaction (2E,6E,10E)-geranylgeranyl diphosphate = hydropyrene + diphosphate. The enzyme catalyses (2E,6E,10E)-geranylgeranyl diphosphate + H2O = hydropyrenol + diphosphate. The catalysed reaction is (2E,6E,10E)-geranylgeranyl diphosphate = isoelisabethatriene + diphosphate. The protein operates within secondary metabolite biosynthesis; terpenoid biosynthesis. Its function is as follows. Terpene synthase that catalyzes the conversion of geranylgeranyl diphosphate (GGPP) into a mixture of diterpenes, including hydropyrene (HP), hydropyrenol (HPol), isoelisabethatriene and traces of isoelisabethatriene B. Hydropyrene is the main product. Some other diterpenoids are also produced in very low quantities. The polypeptide is Hydropyrene synthase (Streptomyces clavuligerus).